Reading from the N-terminus, the 632-residue chain is SH2B adapter protein 2 (632 aa).

Tyrosine 52 carries the phosphotyrosine modification. Serine 141 is modified (phosphoserine). Residues 193–306 (DIQREGALRF…WVADIQGCVD (114 aa)) form the PH domain. At serine 310 the chain carries Phosphoserine. Residues 381–409 (TLESPGGSGSDSNNTGEQGAETDPEAEPE) are disordered. Acidic residues predominate over residues 400–409 (AETDPEAEPE). One can recognise an SH2 domain in the interval 417–515 (WFHGTLSRVK…SADITLRSYV (99 aa)). Disordered stretches follow at residues 516 to 537 (RAQD…SPAC) and 558 to 632 (ASPS…YSFY). Residues 519–532 (DPPPEPGPTPPAAP) show a composition bias toward pro residues. Low complexity-rich tracts occupy residues 558–579 (ASPS…AASG) and 604–626 (EAVA…RAVE). Residue tyrosine 629 is modified to Phosphotyrosine.

Belongs to the SH2B adapter family. Homodimer. Interacts with KIT/c-KIT, SHC1, EPOR, PDGFR, VAV1 and VAV3. Interacts (via N-terminal region) with SHC1. Interacts (via the phosphorylated C-terminus) with GRB2. Interacts (via its SH2 domain) with EPOR, INSR and KIT. Interacts with GRB2 after B-cell antigen receptor stimulation. Interacts (via PH domain) with VAV3. Interacts with NTRK1, NTRK2 and NTRK3 (phosphorylated); after stimulation of the receptor by its extracellular ligand and subsequent autophosphorylation of the receptor. Binds INSR, GRB2, ASB6 and CAP. Insulin stimulation leads to dissociation of CAP. Binds CBS only when SH2B2/APS has become phosphorylated. INSR binding does not depend on the phosphorylation of SH2B2/APS. In terms of processing, tyrosine phosphorylated by JAK2, KIT and other kinases activated by B-cell receptor in response to stimulation with cytokines, IL3, IL5, PDGF, IGF1, IGF2, CSF2/GM-CSF and cross-linking of the B-cell receptor complex. As to expression, expressed in spleen, prostate, testis, uterus, small intestine and skeletal muscle. Among hematopoietic cell lines, expressed exclusively in B-cells. Not expressed in most tumor cell lines.

The protein resides in the cytoplasm. It localises to the cell membrane. Adapter protein for several members of the tyrosine kinase receptor family. Involved in multiple signaling pathways. May be involved in coupling from immunoreceptor to Ras signaling. Acts as a negative regulator of cytokine signaling in collaboration with CBL. Binds to EPOR and suppresses EPO-induced STAT5 activation, possibly through a masking effect on STAT5 docking sites in EPOR. Suppresses PDGF-induced mitogenesis. May induce cytoskeletal reorganization via interaction with VAV3. In Homo sapiens (Human), this protein is SH2B adapter protein 2 (SH2B2).